A 347-amino-acid chain; its full sequence is Spermidine/putrescine import ATP-binding protein PotA (347 aa).

Residues 6–238 (LEIRNLSHYY…PKTKFVADFI (233 aa)) enclose the ABC transporter domain. 40 to 47 (GPSGCGKT) contacts ATP.

This sequence belongs to the ABC transporter superfamily. Spermidine/putrescine importer (TC 3.A.1.11.1) family. The complex is composed of two ATP-binding proteins (PotA), two transmembrane proteins (PotB and PotC) and a solute-binding protein (PotD).

It localises to the cell inner membrane. The enzyme catalyses ATP + H2O + polyamine-[polyamine-binding protein]Side 1 = ADP + phosphate + polyamineSide 2 + [polyamine-binding protein]Side 1.. Its function is as follows. Part of the ABC transporter complex PotABCD involved in spermidine/putrescine import. Responsible for energy coupling to the transport system. This Borrelia garinii subsp. bavariensis (strain ATCC BAA-2496 / DSM 23469 / PBi) (Borreliella bavariensis) protein is Spermidine/putrescine import ATP-binding protein PotA.